The sequence spans 365 residues: UDP-N-acetylglucosamine--N-acetylmuramyl-(pentapeptide) pyrophosphoryl-undecaprenol N-acetylglucosamine transferase (365 aa).

Residues 17–19, N129, R167, S194, I250, 269–274, and Q295 contribute to the UDP-N-acetyl-alpha-D-glucosamine site; these read TGG and ALTVSE.

This sequence belongs to the glycosyltransferase 28 family. MurG subfamily.

The protein localises to the cell inner membrane. The enzyme catalyses di-trans,octa-cis-undecaprenyl diphospho-N-acetyl-alpha-D-muramoyl-L-alanyl-D-glutamyl-meso-2,6-diaminopimeloyl-D-alanyl-D-alanine + UDP-N-acetyl-alpha-D-glucosamine = di-trans,octa-cis-undecaprenyl diphospho-[N-acetyl-alpha-D-glucosaminyl-(1-&gt;4)]-N-acetyl-alpha-D-muramoyl-L-alanyl-D-glutamyl-meso-2,6-diaminopimeloyl-D-alanyl-D-alanine + UDP + H(+). Its pathway is cell wall biogenesis; peptidoglycan biosynthesis. In terms of biological role, cell wall formation. Catalyzes the transfer of a GlcNAc subunit on undecaprenyl-pyrophosphoryl-MurNAc-pentapeptide (lipid intermediate I) to form undecaprenyl-pyrophosphoryl-MurNAc-(pentapeptide)GlcNAc (lipid intermediate II). This is UDP-N-acetylglucosamine--N-acetylmuramyl-(pentapeptide) pyrophosphoryl-undecaprenol N-acetylglucosamine transferase from Shewanella piezotolerans (strain WP3 / JCM 13877).